The following is a 181-amino-acid chain: Ribosome maturation factor RimM (181 aa).

The 78-residue stretch at 100-177 folds into the PRC barrel domain; the sequence is EEGFYWMQLI…QIQVDWQLED (78 aa).

Belongs to the RimM family. Binds ribosomal protein uS19.

The protein localises to the cytoplasm. Its function is as follows. An accessory protein needed during the final step in the assembly of 30S ribosomal subunit, possibly for assembly of the head region. Essential for efficient processing of 16S rRNA. May be needed both before and after RbfA during the maturation of 16S rRNA. It has affinity for free ribosomal 30S subunits but not for 70S ribosomes. In Hydrogenovibrio crunogenus (strain DSM 25203 / XCL-2) (Thiomicrospira crunogena), this protein is Ribosome maturation factor RimM.